The chain runs to 1490 residues: WD repeat-containing protein 7 (1490 aa).

WD repeat units follow at residues 17–56 (APTH…QINP), 62–104 (GHTA…CIEF), 156–199 (ISPD…SDMQ), 324–366 (LICP…DKQG), 404–443 (NEPL…IVQL), 462–507 (GHRN…MKHI), and 558–597 (RHLF…LDRC). Disordered stretches follow at residues 761-783 (DEEE…YRSS) and 911-945 (GDHM…IVQG). Positions 768–782 (IMRQRREESDPEYRS) are enriched in basic and acidic residues. Serine 935 carries the post-translational modification Phosphoserine. Residues 936–945 (PPTSSNIVQG) show a composition bias toward polar residues. 2 WD repeats span residues 1351–1390 (PAIC…CQTI) and 1392–1432 (GHKG…LGSI). Serine 1456 is subject to Phosphoserine.

The chain is WD repeat-containing protein 7 (WDR7) from Homo sapiens (Human).